Consider the following 183-residue polypeptide: Hypoxanthine/guanine phosphoribosyltransferase (183 aa).

Belongs to the purine/pyrimidine phosphoribosyltransferase family. Archaeal HPRT subfamily. Homodimer.

It is found in the cytoplasm. The catalysed reaction is IMP + diphosphate = hypoxanthine + 5-phospho-alpha-D-ribose 1-diphosphate. It carries out the reaction GMP + diphosphate = guanine + 5-phospho-alpha-D-ribose 1-diphosphate. Its pathway is purine metabolism; IMP biosynthesis via salvage pathway; IMP from hypoxanthine: step 1/1. Functionally, catalyzes a salvage reaction resulting in the formation of IMP that is energically less costly than de novo synthesis. The polypeptide is Hypoxanthine/guanine phosphoribosyltransferase (Methanotorris igneus (strain DSM 5666 / JCM 11834 / Kol 5)).